The sequence spans 263 residues: Hydroxyacylglutathione hydrolase (263 aa).

Residues His-56, His-58, Asp-60, His-61, His-115, Asp-135, and His-175 each contribute to the Zn(2+) site.

The protein belongs to the metallo-beta-lactamase superfamily. Glyoxalase II family. Monomer. Zn(2+) is required as a cofactor.

It carries out the reaction an S-(2-hydroxyacyl)glutathione + H2O = a 2-hydroxy carboxylate + glutathione + H(+). It participates in secondary metabolite metabolism; methylglyoxal degradation; (R)-lactate from methylglyoxal: step 2/2. Thiolesterase that catalyzes the hydrolysis of S-D-lactoyl-glutathione to form glutathione and D-lactic acid. The sequence is that of Hydroxyacylglutathione hydrolase from Polaromonas sp. (strain JS666 / ATCC BAA-500).